The primary structure comprises 284 residues: Bifunctional protein FolD (284 aa).

NADP(+) is bound by residues 166-168 (GAS) and isoleucine 232.

The protein belongs to the tetrahydrofolate dehydrogenase/cyclohydrolase family. In terms of assembly, homodimer.

It catalyses the reaction (6R)-5,10-methylene-5,6,7,8-tetrahydrofolate + NADP(+) = (6R)-5,10-methenyltetrahydrofolate + NADPH. It carries out the reaction (6R)-5,10-methenyltetrahydrofolate + H2O = (6R)-10-formyltetrahydrofolate + H(+). Its pathway is one-carbon metabolism; tetrahydrofolate interconversion. Catalyzes the oxidation of 5,10-methylenetetrahydrofolate to 5,10-methenyltetrahydrofolate and then the hydrolysis of 5,10-methenyltetrahydrofolate to 10-formyltetrahydrofolate. This is Bifunctional protein FolD from Shewanella frigidimarina (strain NCIMB 400).